A 423-amino-acid polypeptide reads, in one-letter code: Imidazolonepropionase (423 aa).

Residues histidine 80 and histidine 82 each contribute to the Fe(3+) site. Zn(2+) is bound by residues histidine 80 and histidine 82. 3 residues coordinate 4-imidazolone-5-propanoate: arginine 89, tyrosine 152, and histidine 185. Tyrosine 152 is an N-formimidoyl-L-glutamate binding site. Histidine 250 is a binding site for Fe(3+). Residue histidine 250 coordinates Zn(2+). Glutamine 253 serves as a coordination point for 4-imidazolone-5-propanoate. Aspartate 325 contacts Fe(3+). Residue aspartate 325 participates in Zn(2+) binding. 2 residues coordinate N-formimidoyl-L-glutamate: asparagine 327 and glycine 329. A 4-imidazolone-5-propanoate-binding site is contributed by threonine 330.

It belongs to the metallo-dependent hydrolases superfamily. HutI family. The cofactor is Zn(2+). Fe(3+) serves as cofactor.

It is found in the cytoplasm. The catalysed reaction is 4-imidazolone-5-propanoate + H2O = N-formimidoyl-L-glutamate. It functions in the pathway amino-acid degradation; L-histidine degradation into L-glutamate; N-formimidoyl-L-glutamate from L-histidine: step 3/3. Catalyzes the hydrolytic cleavage of the carbon-nitrogen bond in imidazolone-5-propanoate to yield N-formimidoyl-L-glutamate. It is the third step in the universal histidine degradation pathway. The chain is Imidazolonepropionase from Cupriavidus pinatubonensis (strain JMP 134 / LMG 1197) (Cupriavidus necator (strain JMP 134)).